Consider the following 213-residue polypeptide: MSHDTYELKAEAREQVGKGSARAVRRNGKVPAVIYGDKQPPLAIALTYKDIYYKIHGGGFLTTIATIDVDGKKIQVLPKDFQLDPVKDFPVHVDFLRIGKDTEVNVDVPVHFINEDKSPGIKRGGVLNIVRHEVEFHCPANAIPEFITIDLTGTNIGDSIHISAVQLPAGVKPVISDRDFTIATIAGSSAMKPEAEETVEVAAPEAAPVAEEK.

It belongs to the bacterial ribosomal protein bL25 family. CTC subfamily. Part of the 50S ribosomal subunit; part of the 5S rRNA/L5/L18/L25 subcomplex. Contacts the 5S rRNA. Binds to the 5S rRNA independently of L5 and L18.

In terms of biological role, this is one of the proteins that binds to the 5S RNA in the ribosome where it forms part of the central protuberance. The polypeptide is Large ribosomal subunit protein bL25 (Mesorhizobium japonicum (strain LMG 29417 / CECT 9101 / MAFF 303099) (Mesorhizobium loti (strain MAFF 303099))).